Reading from the N-terminus, the 158-residue chain is Lysozyme C (158 aa).

An N-terminal signal peptide occupies residues 1–18; sequence MRVLPLALLVGLLAVSDA. Residues 19–150 enclose the C-type lysozyme domain; that stretch reads KVLGKCEFAR…DQYMAECWSR (132 aa). 4 disulfide bridges follow: Cys24–Cys147, Cys46–Cys135, Cys80–Cys93, and Cys89–Cys107. Catalysis depends on residues Glu51 and Asp68.

Belongs to the glycosyl hydrolase 22 family. In terms of assembly, monomer. Strongly expressed in gill and gonad, and marginally detectable in hemolymph and lymphoid organ. Not expressed in kidney, hepatopancreas or tail muscle.

The protein resides in the secreted. It carries out the reaction Hydrolysis of (1-&gt;4)-beta-linkages between N-acetylmuramic acid and N-acetyl-D-glucosamine residues in a peptidoglycan and between N-acetyl-D-glucosamine residues in chitodextrins.. Its function is as follows. Lysozymes have primarily a bacteriolytic function; those in tissues and body fluids are associated with the monocyte-macrophage system and enhance the activity of immunoagents. Has bacteriolytic activity against Gram-positive bacterium M.luteus, and Gram-negative shrimp pathogenic bacteria V.alginolyticus, V.parahaemolyticus and V.vulnificus. May play a role in host defense. This chain is Lysozyme C, found in Penaeus merguiensis (Banana prawn).